Here is a 533-residue protein sequence, read N- to C-terminus: (E)-beta-farnesene synthase (533 aa).

Aspartate 286, aspartate 290, asparagine 430, serine 434, and glutamate 438 together coordinate Mg(2+). The DDXXD motif signature appears at 286–290 (DDMMD).

It belongs to the terpene synthase family. Mg(2+) serves as cofactor. The cofactor is Co(2+). Mn(2+) is required as a cofactor.

It localises to the cytoplasm. The catalysed reaction is (2E,6E)-farnesyl diphosphate = (E)-beta-farnesene + diphosphate. The protein operates within secondary metabolite biosynthesis; terpenoid biosynthesis. Its function is as follows. Sesquiterpene cyclase catalyzing the production of sixfold more beta-farnesene than alpha-bergamotene from farnesyl diphosphate. Involved in indirect defense by producing volatile signals attracting natural enemies of herbivores. This Zea perennis (Perennial teosinte) protein is (E)-beta-farnesene synthase.